Consider the following 810-residue polypeptide: Plasminogen (810 aa).

Positions 1 to 19 are cleaved as a signal peptide; it reads MEHKEVVLLLLLFLKSGQG. The PAN domain occupies 20–98; it reads EPLDDYVNTQ…RDVVLFEKKV (79 aa). Disulfide bonds link Cys-49–Cys-73, Cys-53–Cys-61, Cys-103–Cys-181, Cys-124–Cys-164, Cys-152–Cys-176, Cys-185–Cys-262, Cys-188–Cys-316, Cys-206–Cys-245, Cys-234–Cys-257, Cys-275–Cys-352, Cys-296–Cys-335, and Cys-324–Cys-347. Kringle domains lie at 103 to 181 and 184 to 262; these read CKTG…ILEC and ECMH…IPRC. The tract at residues 126-145 is disordered; it reads KWSSTSPHRPRFSPATHPSE. Positions 136, 158, and 172 each coordinate L-lysine. O-linked (GalNAc...) serine glycosylation is present at Ser-268. The Kringle 3 domain occupies 275–352; it reads CLKGTGENYR…RWEYCKIPSC (78 aa). Asn-308 carries N-linked (GlcNAc...) asparagine glycosylation. An O-linked (GalNAc...) threonine glycan is attached at Thr-365. 9 disulfide bridges follow: Cys-377-Cys-454, Cys-398-Cys-437, Cys-426-Cys-449, Cys-481-Cys-560, Cys-502-Cys-543, Cys-531-Cys-555, Cys-567-Cys-685, Cys-577-Cys-585, and Cys-607-Cys-623. 2 consecutive Kringle domains span residues 377–454 and 481–560; these read CYHG…LKKC and CMFG…VPQC. A disordered region spans residues 396-416; it reads KKCQSWSSMTPHRHQKTPENY. 2 residues coordinate L-lysine: Asp-432 and Arg-445. The 228-residue stretch at 581–808 folds into the Peptidase S1 domain; the sequence is VVGGCVAHPH…FVTWIEGVMR (228 aa). Position 597 is a phosphoserine (Ser-597). Active-site charge relay system residues include His-622 and Asp-665. At Ser-688 the chain carries Phosphoserine. 3 cysteine pairs are disulfide-bonded: Cys-699–Cys-766, Cys-729–Cys-745, and Cys-756–Cys-784. The Charge relay system role is filled by Ser-760.

Belongs to the peptidase S1 family. Plasminogen subfamily. As to quaternary structure, interacts (both mature PLG and the angiostatin peptide) with CSPG4 and AMOT. Interacts (via the Kringle domains) with HRG; the interaction tethers PLG to the cell surface and enhances its activation. Interacts (via Kringle 4 domain) with ADA; the interaction stimulates PLG activation when in complex with DPP4. Angiostatin: Interacts with ATP5F1A; the interaction inhibits most of the angiogenic effects of angiostatin. Interacts (plasmin) with iripin-8, a serine protease inhibitor from Ixodes ricinus saliva. Interacts (plasmin) with iripin-1, a serine protease inhibitor from Ixodes ricinus saliva. Interacts (plasmin) with Kazal-type trypsin inhibitor, a serine protease inhibitor from Aedes aegypti. In terms of assembly, (Microbial infection) Interacts with C.albicans GPD2; the interaction is direct and provides active plasmin on the surface of fungal cells. (Microbial infection) Interacts with Staphylococcus aureus protein FnbB; this interaction provides active plasmin on the surface of bacterial cells. As to quaternary structure, (Microbial infection) Interacts with P.falciparum (strain NF54) enolase ENO (via DKSLVK motif); the interaction occurs at the ookinete cell surface and is required for ookinete invasion of the mosquito midgut. In terms of assembly, (Microbial infection) Interacts with B.burgdorferi OspC. In terms of processing, N-linked glycan contains N-acetyllactosamine and sialic acid. O-linked glycans consist of Gal-GalNAc disaccharide modified with up to 2 sialic acid residues (microheterogeneity). In the presence of the inhibitor, the activation involves only cleavage after Arg-580, yielding two chains held together by two disulfide bonds. In the absence of the inhibitor, the activation involves additionally the removal of the activation peptide. Post-translationally, (Microbial infection) The Y.pestis Pla protein cleaves between Arg-580 and Val-581, generating plasmin which facilitates bacterial migration and infection. Present in plasma and many other extracellular fluids. It is synthesized in the liver.

It is found in the secreted. The catalysed reaction is Preferential cleavage: Lys-|-Xaa &gt; Arg-|-Xaa, higher selectivity than trypsin. Converts fibrin into soluble products.. Its activity is regulated as follows. Converted into plasmin by plasminogen activators, both plasminogen and its activator being bound to fibrin. Activated with catalytic amounts of streptokinase. Plasmin activity inhibited by SERPINE2. In terms of biological role, plasmin dissolves the fibrin of blood clots and acts as a proteolytic factor in a variety of other processes including embryonic development, tissue remodeling, tumor invasion, and inflammation. In ovulation, weakens the walls of the Graafian follicle. It activates the urokinase-type plasminogen activator, collagenases and several complement zymogens, such as C1, C4 and C5. Cleavage of fibronectin and laminin leads to cell detachment and apoptosis. Also cleaves fibrin, thrombospondin and von Willebrand factor. Its role in tissue remodeling and tumor invasion may be modulated by CSPG4. Binds to cells. Functionally, angiostatin is an angiogenesis inhibitor that blocks neovascularization and growth of experimental primary and metastatic tumors in vivo. Its function is as follows. (Microbial infection) ENO/enoloase from parasite P.falciparum (strain NF54) interacts with PLG present in the mosquito blood meal to promote the invasion of the mosquito midgut by the parasite ookinete. The catalytic active form, plasmin, is essential for the invasion of the mosquito midgut. (Microbial infection) Binds to OspC on the surface of B.burgdorferi cells, possibly conferring an extracellular protease activity on the bacteria that allows it to traverse host tissue. In terms of biological role, (Microbial infection) Interacts with dengue virus type 2 particles. Enhances dengue virus type 2 infection in Aedes aegypti mosquito midgut by increasing midgut internalization, resulting in higher infection rates and viral dissemination in mosquitoes. The sequence is that of Plasminogen (PLG) from Homo sapiens (Human).